A 367-amino-acid chain; its full sequence is ADP-ribosylhydrolase ARH3 (367 aa).

Positions 41, 79, 80, and 81 each coordinate Mg(2+). Asp80 contributes to the substrate binding site. Substrate is bound by residues 149 to 155 (KGSYGNG), His185, Leu238, and Ile274. Mg(2+) contacts are provided by Asp317 and Thr320.

It belongs to the ADP-ribosylglycohydrolase family. In terms of assembly, monomer. Mg(2+) serves as cofactor.

The protein resides in the nucleus. Its subcellular location is the cytoplasm. It is found in the chromosome. The protein localises to the mitochondrion matrix. The enzyme catalyses [(1''-&gt;2')-ADP-alpha-D-ribose](n) + H2O = [(1''-&gt;2')-ADP-alpha-D-ribose](n-1) + ADP-D-ribose. The catalysed reaction is 1''-O-acetyl-ADP-alpha-D-ribose + H2O = ADP-D-ribose + acetate + H(+). It catalyses the reaction O-(ADP-D-ribosyl)-L-seryl-[protein] + H2O = ADP-D-ribose + L-seryl-[protein]. It carries out the reaction alpha-NAD(+) + H2O = ADP-D-ribose + nicotinamide + H(+). With respect to regulation, the protein undergoes a dramatic conformational switch from closed to open states upon substrate-binding, which enables specific substrate recognition for the 1''-O-linkage. The glutamate flap (Glu-41) blocks substrate entrance to Mg(2+) in the unliganded closed state. In presence of substrate, Glu-41 is ejected from the active site: this closed-to-open transition significantly widens the substrate-binding channel and precisely positions the scissile 1''-O-linkage for cleavage while securing tightly 2'- and 3'-hydroxyls of ADP-ribose. ADP-ribosylhydrolase that preferentially hydrolyzes the scissile alpha-O-linkage attached to the anomeric C1'' position of ADP-ribose and acts on different substrates, such as proteins ADP-ribosylated on serine and threonine, free poly(ADP-ribose) and O-acetyl-ADP-D-ribose. Specifically acts as a serine mono-ADP-ribosylhydrolase by mediating the removal of mono-ADP-ribose attached to serine residues on proteins, thereby playing a key role in DNA damage response. Serine ADP-ribosylation of proteins constitutes the primary form of ADP-ribosylation of proteins in response to DNA damage. Does not hydrolyze ADP-ribosyl-arginine, -cysteine, -diphthamide, or -asparagine bonds. Also able to degrade protein free poly(ADP-ribose), which is synthesized in response to DNA damage: free poly(ADP-ribose) acts as a potent cell death signal and its degradation by ADPRHL2 protects cells from poly(ADP-ribose)-dependent cell death, a process named parthanatos. Also hydrolyzes free poly(ADP-ribose) in mitochondria. Specifically digests O-acetyl-ADP-D-ribose, a product of deacetylation reactions catalyzed by sirtuins. Specifically degrades 1''-O-acetyl-ADP-D-ribose isomer, rather than 2''-O-acetyl-ADP-D-ribose or 3''-O-acetyl-ADP-D-ribose isomers. The sequence is that of ADP-ribosylhydrolase ARH3 (ADPRS) from Gallus gallus (Chicken).